We begin with the raw amino-acid sequence, 119 residues long: Large ribosomal subunit protein bL20 (119 aa).

This sequence belongs to the bacterial ribosomal protein bL20 family.

Binds directly to 23S ribosomal RNA and is necessary for the in vitro assembly process of the 50S ribosomal subunit. It is not involved in the protein synthesizing functions of that subunit. The polypeptide is Large ribosomal subunit protein bL20 (Burkholderia ambifaria (strain MC40-6)).